Consider the following 218-residue polypeptide: Pyridoxine/pyridoxamine 5'-phosphate oxidase (218 aa).

Substrate-binding positions include 12–15 (RLSY) and Arg70. FMN contacts are provided by residues 65 to 70 (RTVLLR), 80 to 81 (YT), Lys87, and Gln109. Substrate contacts are provided by Tyr127, Arg131, and Ser135. FMN contacts are provided by residues 145-146 (QS) and Trp191. 197–199 (RLH) provides a ligand contact to substrate. Arg201 is an FMN binding site.

Belongs to the pyridoxamine 5'-phosphate oxidase family. In terms of assembly, homodimer. FMN is required as a cofactor.

It catalyses the reaction pyridoxamine 5'-phosphate + O2 + H2O = pyridoxal 5'-phosphate + H2O2 + NH4(+). The catalysed reaction is pyridoxine 5'-phosphate + O2 = pyridoxal 5'-phosphate + H2O2. The protein operates within cofactor metabolism; pyridoxal 5'-phosphate salvage; pyridoxal 5'-phosphate from pyridoxamine 5'-phosphate: step 1/1. Its pathway is cofactor metabolism; pyridoxal 5'-phosphate salvage; pyridoxal 5'-phosphate from pyridoxine 5'-phosphate: step 1/1. In terms of biological role, catalyzes the oxidation of either pyridoxine 5'-phosphate (PNP) or pyridoxamine 5'-phosphate (PMP) into pyridoxal 5'-phosphate (PLP). In Acinetobacter baumannii (strain AB0057), this protein is Pyridoxine/pyridoxamine 5'-phosphate oxidase.